A 114-amino-acid polypeptide reads, in one-letter code: Small ribosomal subunit protein uS17 (114 aa).

Belongs to the universal ribosomal protein uS17 family. As to quaternary structure, part of the 30S ribosomal subunit.

Its function is as follows. One of the primary rRNA binding proteins, it binds specifically to the 5'-end of 16S ribosomal RNA. The polypeptide is Small ribosomal subunit protein uS17 (Saccharolobus solfataricus (strain ATCC 35092 / DSM 1617 / JCM 11322 / P2) (Sulfolobus solfataricus)).